A 130-amino-acid chain; its full sequence is Fluoride-specific ion channel FluC (130 aa).

4 consecutive transmembrane segments (helical) span residues 2–22 (GLLLLLVGIGGGFGAMARFAL), 36–56 (GILLCNIIGSLIIGMMAAFLI), 71–91 (FLLVTGFLGGFTTFSSFSLDI), and 100–120 (IFIAIGYIMVSVLASLIAVIL). Residues glycine 79 and threonine 82 each coordinate Na(+).

Belongs to the fluoride channel Fluc/FEX (TC 1.A.43) family.

The protein resides in the cell inner membrane. The enzyme catalyses fluoride(in) = fluoride(out). Na(+) is not transported, but it plays an essential structural role and its presence is essential for fluoride channel function. Functionally, fluoride-specific ion channel. Important for reducing fluoride concentration in the cell, thus reducing its toxicity. This is Fluoride-specific ion channel FluC from Francisella tularensis subsp. mediasiatica (strain FSC147).